The following is a 371-amino-acid chain: Neuropeptide S receptor (371 aa).

Residues 1–52 (MPANLTEGSFHANQTVPMLDSSPVACTEIVTFTEALVAEEWGSFYSSFKTEQ) lie on the Extracellular side of the membrane. Residues Asn4 and Asn13 are each glycosylated (N-linked (GlcNAc...) asparagine). The chain crosses the membrane as a helical span at residues 53 to 73 (LITLWVLFVVTIVGNSVVLFS). Topologically, residues 74–82 (TCRRKRKSR) are cytoplasmic. Residues 83–103 (MTFFVTQLAITDSFTGLINIL) form a helical membrane-spanning segment. Topologically, residues 104-123 (TDIIWRFTGDFMAPDLVCRV) are extracellular. Cys121 and Cys197 are joined by a disulfide. The helical transmembrane segment at 124 to 144 (VRYLQVVLLYASTYVLVSLSI) threads the bilayer. At 145–164 (DRYHAIVYPMKFLQGEKQAK) the chain is on the cytoplasmic side. A helical membrane pass occupies residues 165–185 (VLIGIAWSLSFLFSIPTLIIF). Topologically, residues 186 to 212 (GKRTLSNGEVQCWALWPDDSYWTPYMT) are extracellular. Residues 213–233 (IVAFLVYFIPLAIISVIYGLV) traverse the membrane as a helical segment. Topologically, residues 234-275 (IRTIWMKSKTHETVISNCSDGKLCCSYNRGLISKAKIKAIKY) are cytoplasmic. Residues 276–296 (SIVIILAFICCWSPYFLFDIL) traverse the membrane as a helical segment. Over 297–312 (DNFNVLPDTKERFYAS) the chain is Extracellular. The chain crosses the membrane as a helical span at residues 313–333 (VIIQNLPALNSAINPLIYCIF). Residues 334–371 (SSSICSPCKMQRSQDSRMTYRERSERHEMQILSKPEFI) are Cytoplasmic-facing.

This sequence belongs to the G-protein coupled receptor 1 family. Vasopressin/oxytocin receptor subfamily.

Its subcellular location is the cell membrane. G-protein coupled receptor for neuropeptide S (NPS). Promotes mobilization of intracellular Ca(2+) stores. Inhibits cell growth in response to NPS binding. Involved in pathogenesis of asthma and other IgE-mediated diseases. The chain is Neuropeptide S receptor (Npsr1) from Mus musculus (Mouse).